Consider the following 350-residue polypeptide: MSMIFNTEYGYLEALTRGFKNGMLKHSDYLNLTQCESLEDVMISIQGTDYGLIFGGEQSAPSVEVIERCLRDRLLQQYYYIRSHSTEPLTTFMEFIRYPFMIDNVALLVAGLNNHRSMKRLLRMCHPLGEFDQLGAIEVASNSAELFDAVLIDTPIARFVPRDLPMESLRYLDVEIVRAHLYRAYLEKFYAYCSQLGGNTANVMTNLLSFEADRRTITIAVNAIGSDIIPKERLKMFPTCGYLPKIALASMSTLNDTDKIRDVCNVFDGYGKMFDNLERDSDGMITLEDRFLMMEAKKNVQTFLQQYHFGIFYSFIKLKQLEVRNIVWISECIAQRQTDRINAFIPIPLD.

The protein belongs to the V-ATPase V0D/AC39 subunit family. V-ATPase is a heteromultimeric enzyme made up of two complexes: the ATP-hydrolytic V1 complex and the proton translocation V0 complex. The V1 complex consists of three catalytic AB heterodimers that form a heterohexamer, three peripheral stalks each consisting of EG heterodimers, one central rotor including subunits D and F, and the regulatory subunits C and H. The proton translocation complex V0 consists of the proton transport subunit a, a ring of proteolipid subunits c9c'', rotary subunit d, subunits e and f, and the accessory subunits VhaAC45 and ATP6AP2.

Subunit of the V0 complex of vacuolar(H+)-ATPase (V-ATPase), a multisubunit enzyme composed of a peripheral complex (V1) that hydrolyzes ATP and a membrane integral complex (V0) that translocates protons. V-ATPase is responsible for acidifying and maintaining the pH of intracellular compartments and in some cell types, is targeted to the plasma membrane, where it is responsible for acidifying the extracellular environment. May play a role in coupling of proton transport and ATP hydrolysis. The protein is Probable V-type proton ATPase subunit d 2 (VhaAC39-2) of Drosophila melanogaster (Fruit fly).